Reading from the N-terminus, the 221-residue chain is Adenylate kinase (221 aa).

10–15 lines the ATP pocket; that stretch reads GAGKGT. An NMP region spans residues 30 to 59; the sequence is STGDMLRAAVKAGTEFGVAAKKIMDAGGLV. AMP contacts are provided by residues Thr31, Arg36, 57-59, 85-88, and Gln92; these read GLV and GFPR. The LID stretch occupies residues 122–159; that stretch reads GRRVHPASGRTYHIKYNPPKVEGKDDVTGDALIQRDDD. ATP is bound by residues Arg123 and 132 to 133; that span reads TY. The AMP site is built by Arg156 and Arg167. Gly207 lines the ATP pocket.

This sequence belongs to the adenylate kinase family. Monomer.

The protein localises to the cytoplasm. It catalyses the reaction AMP + ATP = 2 ADP. It participates in purine metabolism; AMP biosynthesis via salvage pathway; AMP from ADP: step 1/1. In terms of biological role, catalyzes the reversible transfer of the terminal phosphate group between ATP and AMP. Plays an important role in cellular energy homeostasis and in adenine nucleotide metabolism. The sequence is that of Adenylate kinase from Polynucleobacter asymbioticus (strain DSM 18221 / CIP 109841 / QLW-P1DMWA-1) (Polynucleobacter necessarius subsp. asymbioticus).